Consider the following 137-residue polypeptide: Holo-[acyl-carrier-protein] synthase (137 aa).

2 residues coordinate Mg(2+): D8 and E61.

The protein belongs to the P-Pant transferase superfamily. AcpS family. Requires Mg(2+) as cofactor.

Its subcellular location is the cytoplasm. The catalysed reaction is apo-[ACP] + CoA = holo-[ACP] + adenosine 3',5'-bisphosphate + H(+). Its function is as follows. Transfers the 4'-phosphopantetheine moiety from coenzyme A to a Ser of acyl-carrier-protein. The sequence is that of Holo-[acyl-carrier-protein] synthase from Afipia carboxidovorans (strain ATCC 49405 / DSM 1227 / KCTC 32145 / OM5) (Oligotropha carboxidovorans).